The following is a 54-amino-acid chain: Large ribosomal subunit protein bL32 (54 aa).

Positions 1–54 are disordered; the sequence is MAVQQNRKTRSRRGMRRSHDALTAAQLSVDSTSGETHRRHHVTADGYYRGKKVI. Over residues 7-16 the composition is skewed to basic residues; that stretch reads RKTRSRRGMR. Residues 25–34 are compositionally biased toward polar residues; the sequence is AQLSVDSTSG.

Belongs to the bacterial ribosomal protein bL32 family.

This Tolumonas auensis (strain DSM 9187 / NBRC 110442 / TA 4) protein is Large ribosomal subunit protein bL32.